The sequence spans 364 residues: Aspartate aminotransferase (364 aa).

Residues G23, W99, and N143 each coordinate L-aspartate. K200 bears the N6-(pyridoxal phosphate)lysine mark. R320 contributes to the L-aspartate binding site.

It belongs to the class-I pyridoxal-phosphate-dependent aminotransferase family. In terms of assembly, homodimer. Pyridoxal 5'-phosphate is required as a cofactor.

It is found in the cytoplasm. It carries out the reaction L-aspartate + 2-oxoglutarate = oxaloacetate + L-glutamate. This Thermococcus kodakarensis (strain ATCC BAA-918 / JCM 12380 / KOD1) (Pyrococcus kodakaraensis (strain KOD1)) protein is Aspartate aminotransferase (aspC).